We begin with the raw amino-acid sequence, 313 residues long: Adhesin MafA 1 (313 aa).

The N-terminal stretch at 1–14 is a signal peptide; sequence MKILLLLIPLVLTA. C15 carries the N-palmitoyl cysteine lipid modification. The S-diacylglycerol cysteine moiety is linked to residue C15. Positions 282 to 298 are enriched in polar residues; sequence GDTTAQNRPDFKQNNGK. Residues 282–313 are disordered; it reads GDTTAQNRPDFKQNNGKNPDVGNEVIRRRKGG.

This sequence belongs to the MafA family.

It localises to the cell outer membrane. This Neisseria meningitidis serogroup C / serotype 2a (strain ATCC 700532 / DSM 15464 / FAM18) protein is Adhesin MafA 1 (mafA1).